The sequence spans 207 residues: Large ribosomal subunit protein uL4 (207 aa).

A disordered region spans residues 49 to 73 (AKKRGEVSGGGKKPWKQKGGGRARA).

It belongs to the universal ribosomal protein uL4 family. In terms of assembly, part of the 50S ribosomal subunit.

Functionally, one of the primary rRNA binding proteins, this protein initially binds near the 5'-end of the 23S rRNA. It is important during the early stages of 50S assembly. It makes multiple contacts with different domains of the 23S rRNA in the assembled 50S subunit and ribosome. Forms part of the polypeptide exit tunnel. This is Large ribosomal subunit protein uL4 from Helicobacter hepaticus (strain ATCC 51449 / 3B1).